A 137-amino-acid polypeptide reads, in one-letter code: uncharacterized protein (137 aa).

The signal sequence occupies residues 1-34 (MAALSRALGPLRTPAPPLWIGLFLVATGSQQSLA). Over residues 33–45 (LAQPLPGNTTEAT) the composition is skewed to polar residues. Disordered stretches follow at residues 33-54 (LAQPLPGNTTEATPRSLRASGS) and 98-137 (VLSPLHRGPSGHTEASAQRSHMGKLKEPQPQDHKPGLGAS). Asn40 carries an N-linked (GlcNAc...) asparagine glycan. The span at 121–137 (KLKEPQPQDHKPGLGAS) shows a compositional bias: basic and acidic residues.

It localises to the secreted. This is an uncharacterized protein from Homo sapiens (Human).